The sequence spans 212 residues: Cytidylate kinase (212 aa).

An ATP-binding site is contributed by 7 to 15 (GPAASGKGT).

Belongs to the cytidylate kinase family. Type 1 subfamily.

Its subcellular location is the cytoplasm. It carries out the reaction CMP + ATP = CDP + ADP. The catalysed reaction is dCMP + ATP = dCDP + ADP. This chain is Cytidylate kinase, found in Rhodopseudomonas palustris (strain TIE-1).